The sequence spans 642 residues: Protein INCREASED PETAL GROWTH ANISOTROPY 1 (642 aa).

The tract at residues 1–60 (MVAGKVRVTMGFHKSPSTKKTKDMPSPLPLPPPPPPPLKPPSSGSATTKPPINPSKPGFT) is disordered. Over residues 26–40 (SPLPLPPPPPPPLKP) the composition is skewed to pro residues. Residues 80 to 183 (AASHNGVVSE…EAEIVELRKL (104 aa)) adopt a coiled-coil conformation. Residues 223 to 351 (NLPEPITNQE…PPKSLSIASA (129 aa)) are disordered. Residues 247–256 (DIYRKDEIES) are compositionally biased toward basic and acidic residues. Residues 258-277 (SRSSNSEELTESSSLSTVRS) show a composition bias toward low complexity. Over residues 302–344 (DPPPQKSIPPPPPPPPPPLLQQPPPPPSVSKAPPPPPPPPPPK) the composition is skewed to pro residues.

Belongs to the IPGA1 family. As to quaternary structure, associates to cortical microtubules via its N-terminal region. Interacts with ANGUSTIFOLIA (AN) on microtubule upon mechanical stress to regulate microtubule organization. Binds to the microtubule-severing enzyme KATANIN (KTN1). In terms of tissue distribution, expressed ubiquitously at all development stages, with highest in developing petals. During mechanical stress, accumulates in granules on microtubules.

Its subcellular location is the cytoplasm. It localises to the cytoskeleton. The protein localises to the cytosol. The protein resides in the cell membrane. Its function is as follows. Microtubule-associated protein involved in the regulation of anisotropic petal and cotyledons growth and shape by affecting cortical microtubule organization. Prevents cortical microtubules organization into parallel arrays oriented perpendicular to the axis of cell elongation thus limiting anisotropic cell growth in the late phases of petal development. Cooperatively with ANGUSTIFOLIA (AN), negatively regulates cortical microtubules (CMTs) organization in response to mechanical stress and modulates pavement cells morphogenesis leading to puzzle shape, probably in an AAA1/KTN1-dependent manner. The chain is Protein INCREASED PETAL GROWTH ANISOTROPY 1 from Arabidopsis thaliana (Mouse-ear cress).